The sequence spans 182 residues: ATP synthase subunit delta 2 (182 aa).

This sequence belongs to the ATPase delta chain family. F-type ATPases have 2 components, F(1) - the catalytic core - and F(0) - the membrane proton channel. F(1) has five subunits: alpha(3), beta(3), gamma(1), delta(1), epsilon(1). F(0) has three main subunits: a(1), b(2) and c(10-14). The alpha and beta chains form an alternating ring which encloses part of the gamma chain. F(1) is attached to F(0) by a central stalk formed by the gamma and epsilon chains, while a peripheral stalk is formed by the delta and b chains.

It localises to the cell inner membrane. F(1)F(0) ATP synthase produces ATP from ADP in the presence of a proton or sodium gradient. F-type ATPases consist of two structural domains, F(1) containing the extramembraneous catalytic core and F(0) containing the membrane proton channel, linked together by a central stalk and a peripheral stalk. During catalysis, ATP synthesis in the catalytic domain of F(1) is coupled via a rotary mechanism of the central stalk subunits to proton translocation. Functionally, this protein is part of the stalk that links CF(0) to CF(1). It either transmits conformational changes from CF(0) to CF(1) or is implicated in proton conduction. The protein is ATP synthase subunit delta 2 of Photobacterium profundum (strain SS9).